The primary structure comprises 237 residues: Ribonuclease PH (237 aa).

Residues arginine 86 and 124–126 (GTR) contribute to the phosphate site.

It belongs to the RNase PH family. As to quaternary structure, homohexameric ring arranged as a trimer of dimers.

It catalyses the reaction tRNA(n+1) + phosphate = tRNA(n) + a ribonucleoside 5'-diphosphate. Functionally, phosphorolytic 3'-5' exoribonuclease that plays an important role in tRNA 3'-end maturation. Removes nucleotide residues following the 3'-CCA terminus of tRNAs; can also add nucleotides to the ends of RNA molecules by using nucleoside diphosphates as substrates, but this may not be physiologically important. Probably plays a role in initiation of 16S rRNA degradation (leading to ribosome degradation) during starvation. The chain is Ribonuclease PH from Methylorubrum populi (strain ATCC BAA-705 / NCIMB 13946 / BJ001) (Methylobacterium populi).